A 160-amino-acid polypeptide reads, in one-letter code: Protein CrtK (160 aa).

5 consecutive transmembrane segments (helical) span residues 3–23 (LTLF…GAIF), 37–57 (WVPP…LMSI), 76–96 (LAFW…FFGL), 101–121 (GGML…VLFW), and 129–149 (LMFV…FSVW).

The protein belongs to the TspO/BZRP family.

The protein localises to the cell inner membrane. It participates in carotenoid biosynthesis; spheroidene biosynthesis. The polypeptide is Protein CrtK (crtK) (Rhodobacter capsulatus (strain ATCC BAA-309 / NBRC 16581 / SB1003)).